We begin with the raw amino-acid sequence, 444 residues long: MSSAKKIGLFACTGVVAGNMMGSGIALLPANLASIGGIAIWGWIISIIGAMSLAYVYARLATKNPQQGGPIAYAGEISPAFGFQTGVLYYHANWIGNLAIGITAVSYLSTFFPVLNDPVPAGIACIAIVWVFTFVNMLGGTWVSRLTTIGLVLVLIPVVMTAIVGWHWFDAATYAANWNTADTTDGHAIIKSILLCLWAFVGVESAAVSTGMVKNPKRTVPLATMLGTGLAGIVYIAATQVLSGMYPSSVMAASGAPFAISASTILGNWAAPLVSAFTAFACLTSLGSWMMLVGQAGVRAANDGNFPKVYGEVDSNGIPKKGLLLAAVKMTALMILITLMNSAGGKASDLFGELTGIAVLLTMLPYFYSCVDLIRFEGVNIRNFVSLICSVLGCVFCFIALMGASSFELAGTFIVSLIILMFYARKMHERQSHSMDNHTASNAH.

12 consecutive transmembrane segments (helical) span residues 7–27 (IGLFACTGVVAGNMMGSGIAL), 35–55 (IGGIAIWGWIISIIGAMSLAY), 95–115 (IGNLAIGITAVSYLSTFFPVL), 123–143 (IACIAIVWVFTFVNMLGGTWV), 149–169 (IGLVLVLIPVVMTAIVGWHWF), 193–213 (ILLCLWAFVGVESAAVSTGMV), 222–242 (LATMLGTGLAGIVYIAATQVL), 273–293 (LVSAFTAFACLTSLGSWMMLV), 323–343 (LLLAAVKMTALMILITLMNSA), 354–374 (LTGIAVLLTMLPYFYSCVDLI), 384–404 (FVSLICSVLGCVFCFIALMGA), and 405–425 (SSFELAGTFIVSLIILMFYAR).

This sequence belongs to the amino acid-polyamine-organocation (APC) superfamily. Basic amino acid/polyamine antiporter (APA) (TC 2.A.3.2) family.

It is found in the cell inner membrane. The enzyme catalyses cadaverine(in) + L-lysine(out) = cadaverine(out) + L-lysine(in). Under acidic conditions, in the presence of lysine, functions as a cadaverine:lysine antiporter that facilitates the excretion of cadaverine and the uptake of lysine. The polypeptide is Cadaverine/lysine antiporter (cadB) (Escherichia coli O157:H7).